Consider the following 445-residue polypeptide: Tubulin beta-2 chain (445 aa).

The MREI motif signature appears at methionine 1–isoleucine 4. Residues glutamine 11, glutamate 69, serine 138, glycine 142, threonine 143, glycine 144, asparagine 204, and asparagine 226 each coordinate GTP. Glutamate 69 provides a ligand contact to Mg(2+). The segment at glutamine 424–alanine 445 is disordered. The span at threonine 429–alanine 445 shows a compositional bias: acidic residues. Glutamate 438 carries the post-translational modification 5-glutamyl polyglutamate.

The protein belongs to the tubulin family. As to quaternary structure, dimer of alpha and beta chains. A typical microtubule is a hollow water-filled tube with an outer diameter of 25 nm and an inner diameter of 15 nM. Alpha-beta heterodimers associate head-to-tail to form protofilaments running lengthwise along the microtubule wall with the beta-tubulin subunit facing the microtubule plus end conferring a structural polarity. Microtubules usually have 13 protofilaments but different protofilament numbers can be found in some organisms and specialized cells. The cofactor is Mg(2+). Some glutamate residues at the C-terminus are polyglycylated, resulting in polyglycine chains on the gamma-carboxyl group. Glycylation is mainly limited to tubulin incorporated into axonemes (cilia and flagella) whereas glutamylation is prevalent in neuronal cells, centrioles, axonemes, and the mitotic spindle. Both modifications can coexist on the same protein on adjacent residues, and lowering polyglycylation levels increases polyglutamylation, and reciprocally. The precise function of polyglycylation is still unclear. Post-translationally, some glutamate residues at the C-terminus are polyglutamylated, resulting in polyglutamate chains on the gamma-carboxyl group. Polyglutamylation plays a key role in microtubule severing by spastin (SPAST). SPAST preferentially recognizes and acts on microtubules decorated with short polyglutamate tails: severing activity by SPAST increases as the number of glutamates per tubulin rises from one to eight, but decreases beyond this glutamylation threshold. As to expression, highly expressed in neuronal cells.

Its subcellular location is the cytoplasm. It localises to the cytoskeleton. Tubulin is the major constituent of microtubules, a cylinder consisting of laterally associated linear protofilaments composed of alpha- and beta-tubulin heterodimers. Microtubules grow by the addition of GTP-tubulin dimers to the microtubule end, where a stabilizing cap forms. Below the cap, tubulin dimers are in GDP-bound state, owing to GTPase activity of alpha-tubulin. The polypeptide is Tubulin beta-2 chain (Gallus gallus (Chicken)).